We begin with the raw amino-acid sequence, 255 residues long: MLKIADRQFSSRLLLGTGKYPSFEIQKEAVSASESEILTFAVRRMNIFEESQPNFLEQLDLSRYTLLPNTAGAKTAEEAVRIAKLAKASGLCDMIKVEVIGCDRSLLPDPVETLKASETLLEEGFIVLPYTSDDVVLARKLEELGVHAIMPGASPIGSGQGIINPLNLSFIIEQAKVPVIVDAGIGSPKDAAYAMELGADGVLLNTAVSGAKDPVQMAKAMKFAVEAGRLGYLAGRIPEKNYGIASSPEEGKLTI.

Lys-96 functions as the Schiff-base intermediate with DXP in the catalytic mechanism. Residues Gly-157, 183 to 184 (AG), and 205 to 206 (NT) contribute to the 1-deoxy-D-xylulose 5-phosphate site.

This sequence belongs to the ThiG family. In terms of assembly, homotetramer. Forms heterodimers with either ThiH or ThiS.

The protein resides in the cytoplasm. The enzyme catalyses [ThiS sulfur-carrier protein]-C-terminal-Gly-aminoethanethioate + 2-iminoacetate + 1-deoxy-D-xylulose 5-phosphate = [ThiS sulfur-carrier protein]-C-terminal Gly-Gly + 2-[(2R,5Z)-2-carboxy-4-methylthiazol-5(2H)-ylidene]ethyl phosphate + 2 H2O + H(+). It participates in cofactor biosynthesis; thiamine diphosphate biosynthesis. Catalyzes the rearrangement of 1-deoxy-D-xylulose 5-phosphate (DXP) to produce the thiazole phosphate moiety of thiamine. Sulfur is provided by the thiocarboxylate moiety of the carrier protein ThiS. In vitro, sulfur can be provided by H(2)S. In Bacillus licheniformis (strain ATCC 14580 / DSM 13 / JCM 2505 / CCUG 7422 / NBRC 12200 / NCIMB 9375 / NCTC 10341 / NRRL NRS-1264 / Gibson 46), this protein is Thiazole synthase.